A 1393-amino-acid polypeptide reads, in one-letter code: DNA-directed RNA polymerase subunit beta' (1393 aa).

Cysteine 70, cysteine 72, cysteine 85, and cysteine 88 together coordinate Zn(2+). Mg(2+) contacts are provided by aspartate 461, aspartate 463, and aspartate 465. 4 residues coordinate Zn(2+): cysteine 815, cysteine 889, cysteine 896, and cysteine 899.

The protein belongs to the RNA polymerase beta' chain family. The RNAP catalytic core consists of 2 alpha, 1 beta, 1 beta' and 1 omega subunit. When a sigma factor is associated with the core the holoenzyme is formed, which can initiate transcription. It depends on Mg(2+) as a cofactor. Zn(2+) serves as cofactor.

The enzyme catalyses RNA(n) + a ribonucleoside 5'-triphosphate = RNA(n+1) + diphosphate. Functionally, DNA-dependent RNA polymerase catalyzes the transcription of DNA into RNA using the four ribonucleoside triphosphates as substrates. The sequence is that of DNA-directed RNA polymerase subunit beta' from Vesicomyosocius okutanii subsp. Calyptogena okutanii (strain HA).